Consider the following 302-residue polypeptide: 33 kDa chaperonin (302 aa).

2 cysteine pairs are disulfide-bonded: Cys247-Cys249 and Cys280-Cys283.

It belongs to the HSP33 family. In terms of processing, under oxidizing conditions two disulfide bonds are formed involving the reactive cysteines. Under reducing conditions zinc is bound to the reactive cysteines and the protein is inactive.

It is found in the cytoplasm. In terms of biological role, redox regulated molecular chaperone. Protects both thermally unfolding and oxidatively damaged proteins from irreversible aggregation. Plays an important role in the bacterial defense system toward oxidative stress. This Prochlorococcus marinus (strain AS9601) protein is 33 kDa chaperonin.